We begin with the raw amino-acid sequence, 409 residues long: Odorant receptor 35a (409 aa).

The Cytoplasmic segment spans residues 1–35 (MVRYVPRFADGQKVKLAWPLAVFRLNHIFWPLDPS). The helical transmembrane segment at 36–56 (TGKWGRYLDKVLAVAMSLVFM) threads the bilayer. The Extracellular portion of the chain corresponds to 57–64 (QHNDAELR). Residues 65–85 (YLRFEASNRNLDAFLTGMPTY) form a helical membrane-spanning segment. The Cytoplasmic portion of the chain corresponds to 86-139 (LILVEAQFRSLHILLHFEKLQKFLEIFYANIYIDPRKEPEMFRKVDGKMIINRL). The chain crosses the membrane as a helical span at residues 140–160 (VSAMYGAVISLYLIAPVFSII). An N-linked (GlcNAc...) asparagine glycan is attached at Asn161. The Extracellular portion of the chain corresponds to 161–177 (NQSKDFLYSMIFPFDSD). A helical membrane pass occupies residues 178-198 (PLYIFVPLLLTNVWVGIVIDT). The Cytoplasmic portion of the chain corresponds to 199–273 (MMFGETNLLC…QQLEAQYTVR (75 aa)). Residues 274 to 294 (VFIMFAFAAGLLCALSFKAYT) form a helical membrane-spanning segment. At 295–302 (NPMANYIY) the chain is on the extracellular side. The helical transmembrane segment at 303-323 (AIWFGAKTVELLSLGQIGSDL) threads the bilayer. At 324-379 (AFTTDSLSTMYYLTHWEQILQYSTNPSENLRLLKLINLAIEMNSKPFYVTGLKYFR) the chain is on the cytoplasmic side. Residues 380-400 (VSLQAGLKILQASFSYFTFLT) traverse the membrane as a helical segment. At 401 to 409 (SMQRRQMSN) the chain is on the extracellular side.

The protein belongs to the insect chemoreceptor superfamily. Heteromeric odorant receptor channel (TC 1.A.69) family. Or1a subfamily. Interacts with Orco. Complexes exist early in the endomembrane system in olfactory sensory neurons (OSNs), coupling these complexes to the conserved ciliary trafficking pathway. In terms of tissue distribution, expressed in ac3B olfactory sensory neurons in the antenna.

The protein resides in the cell membrane. In terms of biological role, odorant receptor which mediates acceptance or avoidance behavior, depending on its substrates. The odorant receptor repertoire encodes a large collection of odor stimuli that vary widely in identity, intensity, and duration. Forms a complex with Orco to form odorant-sensing units, providing sensitive and prolonged odorant signaling and calcium permeability. Involved in the behavioral responses to esters. Involved in the behavioral responses to butanol, pentanol, hexanol, octanol, propyl acetate, and butyl acetate. The sequence is that of Odorant receptor 35a (Or35a) from Drosophila melanogaster (Fruit fly).